The chain runs to 102 residues: ATP-dependent Clp protease adapter protein ClpS (102 aa).

This sequence belongs to the ClpS family. Binds to the N-terminal domain of the chaperone ClpA.

Its function is as follows. Involved in the modulation of the specificity of the ClpAP-mediated ATP-dependent protein degradation. This is ATP-dependent Clp protease adapter protein ClpS from Dechloromonas aromatica (strain RCB).